A 549-amino-acid chain; its full sequence is O-fucosyltransferase 29 (549 aa).

A helical; Signal-anchor for type II membrane protein transmembrane segment spans residues 43–63; sequence TVMWTWVCGFMLFSLGVISLF. Residue N152 is glycosylated (N-linked (GlcNAc...) asparagine). 292 to 294 provides a ligand contact to substrate; it reads HLR. Residues N359 and N527 are each glycosylated (N-linked (GlcNAc...) asparagine). Residues 506–549 form a disordered region; sequence PFSYDKTSTDDEEEDMSEENHNSTSPGHVHLSSADNERDEVFPD. The segment covering 540–549 has biased composition (basic and acidic residues); it reads DNERDEVFPD.

It belongs to the glycosyltransferase GT106 family.

It is found in the membrane. It participates in glycan metabolism. The protein is O-fucosyltransferase 29 of Arabidopsis thaliana (Mouse-ear cress).